Here is a 215-residue protein sequence, read N- to C-terminus: Pyrrolidone-carboxylate peptidase (215 aa).

Active-site residues include E78, C141, and H165.

It belongs to the peptidase C15 family. Homotetramer.

It is found in the cytoplasm. It catalyses the reaction Release of an N-terminal pyroglutamyl group from a polypeptide, the second amino acid generally not being Pro.. Removes 5-oxoproline from various penultimate amino acid residues except L-proline. The polypeptide is Pyrrolidone-carboxylate peptidase (Streptococcus suis (strain 98HAH33)).